Consider the following 740-residue polypeptide: Ion-translocating oxidoreductase complex subunit C (740 aa).

4Fe-4S ferredoxin-type domains follow at residues 369 to 397 (GEPQEEQSCIRCSACADACPADLLPQQLY) and 407 to 436 (KATTHNIADCIECGACAWVCPSNIPLVQYF). The [4Fe-4S] cluster site is built by Cys377, Cys380, Cys383, Cys387, Cys416, Cys419, Cys422, and Cys426. Positions 602–716 (KLEQQQANAE…EPEEQVDPRK (115 aa)) are disordered.

It belongs to the 4Fe4S bacterial-type ferredoxin family. RnfC subfamily. As to quaternary structure, the complex is composed of six subunits: RsxA, RsxB, RsxC, RsxD, RsxE and RsxG. It depends on [4Fe-4S] cluster as a cofactor.

It is found in the cell inner membrane. Its function is as follows. Part of a membrane-bound complex that couples electron transfer with translocation of ions across the membrane. Required to maintain the reduced state of SoxR. The protein is Ion-translocating oxidoreductase complex subunit C of Escherichia coli O139:H28 (strain E24377A / ETEC).